Reading from the N-terminus, the 309-residue chain is Protein FdhE homolog (309 aa).

The protein belongs to the FdhE family.

It localises to the cytoplasm. In terms of biological role, necessary for formate dehydrogenase activity. The polypeptide is Protein FdhE homolog (Serratia proteamaculans (strain 568)).